A 325-amino-acid polypeptide reads, in one-letter code: Elongation factor P--(R)-beta-lysine ligase (325 aa).

Residue 76–78 (SPE) participates in substrate binding. Residues 100–102 (RNE) and N109 each bind ATP. Y118 is a substrate binding site. 244 to 245 (EL) is an ATP binding site. E251 is a substrate binding site. G300 contributes to the ATP binding site.

Belongs to the class-II aminoacyl-tRNA synthetase family. EpmA subfamily. In terms of assembly, homodimer.

The catalysed reaction is D-beta-lysine + L-lysyl-[protein] + ATP = N(6)-((3R)-3,6-diaminohexanoyl)-L-lysyl-[protein] + AMP + diphosphate + H(+). Its function is as follows. With EpmB is involved in the beta-lysylation step of the post-translational modification of translation elongation factor P (EF-P) on 'Lys-34'. Catalyzes the ATP-dependent activation of (R)-beta-lysine produced by EpmB, forming a lysyl-adenylate, from which the beta-lysyl moiety is then transferred to the epsilon-amino group of EF-P 'Lys-34'. This is Elongation factor P--(R)-beta-lysine ligase from Salmonella typhi.